The sequence spans 134 residues: Prefoldin subunit 4 (134 aa).

Residue Ala-2 is modified to N-acetylalanine. At Ser-125 the chain carries Phosphoserine.

The protein belongs to the prefoldin subunit beta family. As to quaternary structure, heterohexamer of two PFD-alpha type and four PFD-beta type subunits. Interacts with URI1; the interaction is phosphorylation-dependent and occurs in a growth-dependent manner.

The protein resides in the nucleus. The protein localises to the cytoplasm. It is found in the mitochondrion. In terms of biological role, binds specifically to cytosolic chaperonin (c-CPN) and transfers target proteins to it. Binds to nascent polypeptide chain and promotes folding in an environment in which there are many competing pathways for nonnative proteins. This chain is Prefoldin subunit 4 (PFDN4), found in Homo sapiens (Human).